We begin with the raw amino-acid sequence, 356 residues long: Leucine carboxyl methyltransferase 1 (356 aa).

S-adenosyl-L-methionine contacts are provided by residues Arg78, Gly101, Asp127, 183–184, and Glu218; that span reads DL.

This sequence belongs to the methyltransferase superfamily. LCMT family.

The catalysed reaction is [phosphatase 2A protein]-C-terminal L-leucine + S-adenosyl-L-methionine = [phosphatase 2A protein]-C-terminal L-leucine methyl ester + S-adenosyl-L-homocysteine. In terms of biological role, methylates the carboxyl group of the C-terminal leucine residue of protein phosphatase 2A catalytic subunits to form alpha-leucine ester residues. This chain is Leucine carboxyl methyltransferase 1 (PPM1), found in Cryptococcus neoformans var. neoformans serotype D (strain JEC21 / ATCC MYA-565) (Filobasidiella neoformans).